Reading from the N-terminus, the 116-residue chain is uncharacterized protein (116 aa).

This is an uncharacterized protein from Methanocaldococcus jannaschii (strain ATCC 43067 / DSM 2661 / JAL-1 / JCM 10045 / NBRC 100440) (Methanococcus jannaschii).